The following is a 453-amino-acid chain: Ribosomal protein uS12 methylthiotransferase RimO (453 aa).

Residues 3-118 (KKVGIISLGC…IAKVIEEFYS (116 aa)) form the MTTase N-terminal domain. Residues C12, C48, C81, C162, C166, and C169 each contribute to the [4Fe-4S] cluster site. The 231-residue stretch at 148-378 (STNSGYAYLK…MQLQKEIVQR (231 aa)) folds into the Radical SAM core domain. One can recognise a TRAM domain in the interval 381-449 (ESRLEKVYKT…DYDLIGEVIN (69 aa)).

This sequence belongs to the methylthiotransferase family. RimO subfamily. [4Fe-4S] cluster serves as cofactor.

Its subcellular location is the cytoplasm. The catalysed reaction is L-aspartate(89)-[ribosomal protein uS12]-hydrogen + (sulfur carrier)-SH + AH2 + 2 S-adenosyl-L-methionine = 3-methylsulfanyl-L-aspartate(89)-[ribosomal protein uS12]-hydrogen + (sulfur carrier)-H + 5'-deoxyadenosine + L-methionine + A + S-adenosyl-L-homocysteine + 2 H(+). Its function is as follows. Catalyzes the methylthiolation of an aspartic acid residue of ribosomal protein uS12. This is Ribosomal protein uS12 methylthiotransferase RimO from Acetivibrio thermocellus (strain ATCC 27405 / DSM 1237 / JCM 9322 / NBRC 103400 / NCIMB 10682 / NRRL B-4536 / VPI 7372) (Clostridium thermocellum).